The sequence spans 143 residues: Probable cyclic pyranopterin monophosphate synthase (143 aa).

Residues 61-63 (MCH) and 97-98 (ME) each bind substrate. Asp-112 is an active-site residue.

This sequence belongs to the MoaC family. In terms of assembly, homohexamer; trimer of dimers.

It carries out the reaction (8S)-3',8-cyclo-7,8-dihydroguanosine 5'-triphosphate = cyclic pyranopterin phosphate + diphosphate. It participates in cofactor biosynthesis; molybdopterin biosynthesis. In terms of biological role, catalyzes the conversion of (8S)-3',8-cyclo-7,8-dihydroguanosine 5'-triphosphate to cyclic pyranopterin monophosphate (cPMP). This chain is Probable cyclic pyranopterin monophosphate synthase, found in Sulfolobus acidocaldarius (strain ATCC 33909 / DSM 639 / JCM 8929 / NBRC 15157 / NCIMB 11770).